A 209-amino-acid polypeptide reads, in one-letter code: Prolactin (209 aa).

An N-terminal signal peptide occupies residues 1–24; the sequence is MAQRFKGSNLFLTALLCLASQGHA. Intrachain disulfides connect C70–C184 and C201–C209.

Belongs to the somatotropin/prolactin family.

Its subcellular location is the secreted. This chain is Prolactin (prl), found in Anguilla japonica (Japanese eel).